The sequence spans 286 residues: DegV domain-containing protein M6_Spy1658 (286 aa).

Residues phenylalanine 3–glycine 282 enclose the DegV domain. Hexadecanoate contacts are provided by threonine 62 and serine 94.

Functionally, may bind long-chain fatty acids, such as palmitate, and may play a role in lipid transport or fatty acid metabolism. This Streptococcus pyogenes serotype M6 (strain ATCC BAA-946 / MGAS10394) protein is DegV domain-containing protein M6_Spy1658.